The sequence spans 273 residues: MPELPEVETSLRGVEPYLHGKIIKQIVVRTQKLRWAVSDELQHMQGAKIVALSRRAKYLILHTTQGDILIHLGMSGSLGILQENQQPAGKHDHVDLITQDGMVLRYNDPRKFGCWLWTKNAEQHELITRLGPEPLSESFTAAYLFARSRNKTVAVKNFIMNNDIVVGVGNIYACESLFMAELHPELAAQNLTEKQCERLVKVIKEVLAKAIIQGGTTLKDFIQPDGKPGYFAQVLQVYGRKDEACNDCGTIIEAKVIGQRNSYFCPHCQMLPR.

Pro-2 functions as the Schiff-base intermediate with DNA in the catalytic mechanism. The active-site Proton donor is the Glu-3. Lys-57 serves as the catalytic Proton donor; for beta-elimination activity. The DNA site is built by His-91, Arg-110, and Lys-151. The FPG-type zinc-finger motif lies at 236–270 (QVYGRKDEACNDCGTIIEAKVIGQRNSYFCPHCQM). Arg-260 serves as the catalytic Proton donor; for delta-elimination activity.

This sequence belongs to the FPG family. As to quaternary structure, monomer. It depends on Zn(2+) as a cofactor.

The enzyme catalyses Hydrolysis of DNA containing ring-opened 7-methylguanine residues, releasing 2,6-diamino-4-hydroxy-5-(N-methyl)formamidopyrimidine.. It catalyses the reaction 2'-deoxyribonucleotide-(2'-deoxyribose 5'-phosphate)-2'-deoxyribonucleotide-DNA = a 3'-end 2'-deoxyribonucleotide-(2,3-dehydro-2,3-deoxyribose 5'-phosphate)-DNA + a 5'-end 5'-phospho-2'-deoxyribonucleoside-DNA + H(+). Involved in base excision repair of DNA damaged by oxidation or by mutagenic agents. Acts as a DNA glycosylase that recognizes and removes damaged bases. Has a preference for oxidized purines, such as 7,8-dihydro-8-oxoguanine (8-oxoG). Has AP (apurinic/apyrimidinic) lyase activity and introduces nicks in the DNA strand. Cleaves the DNA backbone by beta-delta elimination to generate a single-strand break at the site of the removed base with both 3'- and 5'-phosphates. This is Formamidopyrimidine-DNA glycosylase from Actinobacillus pleuropneumoniae serotype 5b (strain L20).